The sequence spans 429 residues: Bifunctional protein GlmU (429 aa).

Residues 1–223 (MKTSILILAA…EDEFMGINDK (223 aa)) form a pyrophosphorylase region. UDP-N-acetyl-alpha-D-glucosamine-binding positions include 8–11 (LAAG), Lys-22, and 81–82 (GT). Asp-102 provides a ligand contact to Mg(2+). The UDP-N-acetyl-alpha-D-glucosamine site is built by Gly-135, Glu-149, Asn-164, and Asn-221. Asn-221 provides a ligand contact to Mg(2+). Residues 224-244 (FELSIAENFMQEKIKKYWMQQ) are linker. The segment at 245–429 (GVIFHLPQST…KDYYYKKFQK (185 aa)) is N-acetyltransferase. UDP-N-acetyl-alpha-D-glucosamine is bound by residues Arg-308 and Lys-325. His-336 acts as the Proton acceptor in catalysis. Positions 339 and 350 each coordinate UDP-N-acetyl-alpha-D-glucosamine. Acetyl-CoA-binding positions include 359–360 (NY), Ser-378, Ala-396, and Arg-413.

This sequence in the N-terminal section; belongs to the N-acetylglucosamine-1-phosphate uridyltransferase family. The protein in the C-terminal section; belongs to the transferase hexapeptide repeat family. Homotrimer. The cofactor is Mg(2+).

Its subcellular location is the cytoplasm. The catalysed reaction is alpha-D-glucosamine 1-phosphate + acetyl-CoA = N-acetyl-alpha-D-glucosamine 1-phosphate + CoA + H(+). It carries out the reaction N-acetyl-alpha-D-glucosamine 1-phosphate + UTP + H(+) = UDP-N-acetyl-alpha-D-glucosamine + diphosphate. It functions in the pathway nucleotide-sugar biosynthesis; UDP-N-acetyl-alpha-D-glucosamine biosynthesis; N-acetyl-alpha-D-glucosamine 1-phosphate from alpha-D-glucosamine 6-phosphate (route II): step 2/2. The protein operates within nucleotide-sugar biosynthesis; UDP-N-acetyl-alpha-D-glucosamine biosynthesis; UDP-N-acetyl-alpha-D-glucosamine from N-acetyl-alpha-D-glucosamine 1-phosphate: step 1/1. Its pathway is bacterial outer membrane biogenesis; LPS lipid A biosynthesis. Functionally, catalyzes the last two sequential reactions in the de novo biosynthetic pathway for UDP-N-acetylglucosamine (UDP-GlcNAc). The C-terminal domain catalyzes the transfer of acetyl group from acetyl coenzyme A to glucosamine-1-phosphate (GlcN-1-P) to produce N-acetylglucosamine-1-phosphate (GlcNAc-1-P), which is converted into UDP-GlcNAc by the transfer of uridine 5-monophosphate (from uridine 5-triphosphate), a reaction catalyzed by the N-terminal domain. The sequence is that of Bifunctional protein GlmU from Campylobacter jejuni (strain RM1221).